Reading from the N-terminus, the 694-residue chain is MIIMAREFELKDYRNIGIMAHIDAGKTTTTERILFHTGKIHKIGETHEGASQMDWMPQEQERGITITSAATTAFWKGKRINIIDTPGHVDFTVEVERSLRVLDGAVAVLDAQSGVEPQTETVWRQATNYKVPRIVFVNKMDKAGANFDEAVKSVRTRLGGNAVPIQWNIGAESEFQGFIDLVNMEAWIFDGKAEENGQKIAIPTNLVKIAKEKRQELIDAVANYEEDIMMLALEGQDVDNETLKKAIRKATLTSEFFPAVCGSAFKNKGVKAMIDAVIDYLPSPLDVPAIEAHQGENIITVKPSDDGDFSALAFKVMTDPYVGTLTFFRVYSGILNKGSYVINSTKEKKERIGRILQMHANSRTEIEEVRTGDIAAAVGLKDTTTGDTLIGEKAKMFILEKMIFPEPVISQALEPATKAATEKLSLGLQKLSGEDPTFKTYTNEETGQTIIAGMGELHLDIIVDRLRREFGVEVNVGAPQVSYRETITATAEIEGKHIKQSGGKGQYGHVWIKFEPNHDKGFEFVDKIVGGKIPKEYIKHVQKGLEEKMEIGILAGYPLIDVKATLFDGSYHDVDSSELAYKIAASKALTDGKSKLGATLLEPIMNVDVVIPEDYFGDIMGDLSRRRGQIKETKTRSDGASTIKANVPLSEMFGYATDLRSMTAGRGNYQMIFNHYEKAPKNISDEIIKKRNFN.

A tr-type G domain is found at 11-285; that stretch reads KDYRNIGIMA…AVIDYLPSPL (275 aa). GTP is bound by residues 20–27, 84–88, and 138–141; these read AHIDAGKT, DTPGH, and NKMD.

This sequence belongs to the TRAFAC class translation factor GTPase superfamily. Classic translation factor GTPase family. EF-G/EF-2 subfamily.

The protein localises to the cytoplasm. Catalyzes the GTP-dependent ribosomal translocation step during translation elongation. During this step, the ribosome changes from the pre-translocational (PRE) to the post-translocational (POST) state as the newly formed A-site-bound peptidyl-tRNA and P-site-bound deacylated tRNA move to the P and E sites, respectively. Catalyzes the coordinated movement of the two tRNA molecules, the mRNA and conformational changes in the ribosome. The sequence is that of Elongation factor G from Mycoplasma mobile (strain ATCC 43663 / 163K / NCTC 11711) (Mesomycoplasma mobile).